The primary structure comprises 322 residues: Secreted RxLR effector protein RXLR-C17 (322 aa).

A signal peptide spans Met-1–Ala-25. The short motif at Arg-43–Arg-62 is the RxLR-dEER element. Residue Asn-73 is glycosylated (N-linked (GlcNAc...) asparagine).

Belongs to the RxLR effector family.

The protein resides in the secreted. It localises to the host cytoplasm. The protein localises to the host nucleus. In terms of biological role, secreted effector that suppresses pattern-triggered immunity (PTI) in plant host. In Plasmopara halstedii (Downy mildew of sunflower), this protein is Secreted RxLR effector protein RXLR-C17.